The following is a 91-amino-acid chain: Small ribosomal subunit protein uS19 (91 aa).

The protein belongs to the universal ribosomal protein uS19 family.

In terms of biological role, protein S19 forms a complex with S13 that binds strongly to the 16S ribosomal RNA. This Halorhodospira halophila (strain DSM 244 / SL1) (Ectothiorhodospira halophila (strain DSM 244 / SL1)) protein is Small ribosomal subunit protein uS19.